A 412-amino-acid chain; its full sequence is Argininosuccinate synthase (412 aa).

ATP-binding positions include 10-18 (AYSGGLDTS) and Ala36. Tyr87 and Ser92 together coordinate L-citrulline. Phosphotyrosine is present on Tyr87. Residue Lys112 is modified to N6-acetyllysine. Residue Tyr113 is modified to Phosphotyrosine. 115–123 (SHGATGKGN) serves as a coordination point for ATP. L-aspartate-binding residues include Thr119, Asn123, and Asp124. Asn123 lines the L-citrulline pocket. Arg127 serves as a coordination point for L-citrulline. 2 positions are modified to N6-acetyllysine; by CLOCK: Lys165 and Lys176. Residues Ser180 and Ser189 each coordinate L-citrulline. The residue at position 180 (Ser180) is a Phosphoserine. Thr219 is modified (phosphothreonine). L-citrulline contacts are provided by Glu270 and Tyr282.

This sequence belongs to the argininosuccinate synthase family. Type 1 subfamily. Homotetramer. Interacts with NMRAL1. Interacts with CLOCK; in a circadian manner. Forms tissue-specific complexes with ASL, SLC7A1, HSP90AA1 and nitric oxide synthase NOS1, NOS2 or NOS3; the complex regulates cell-autonomous L-arginine synthesis and citrulline recycling while channeling extracellular L-arginine to nitric oxide synthesis pathway. In terms of processing, acetylated by CLOCK in a circadian manner which negatively regulates its enzyme activity. Deacetylated by histone deacetylases. In terms of tissue distribution, expressed in adult liver.

It is found in the cytoplasm. The protein resides in the cytosol. It catalyses the reaction L-citrulline + L-aspartate + ATP = 2-(N(omega)-L-arginino)succinate + AMP + diphosphate + H(+). It participates in amino-acid biosynthesis; L-arginine biosynthesis; L-arginine from L-ornithine and carbamoyl phosphate: step 2/3. Its pathway is nitrogen metabolism; urea cycle; (N(omega)-L-arginino)succinate from L-aspartate and L-citrulline: step 1/1. Its function is as follows. One of the enzymes of the urea cycle, the metabolic pathway transforming neurotoxic amonia produced by protein catabolism into inocuous urea in the liver of ureotelic animals. Catalyzes the formation of arginosuccinate from aspartate, citrulline and ATP and together with ASL it is responsible for the biosynthesis of arginine in most body tissues. The protein is Argininosuccinate synthase of Homo sapiens (Human).